A 553-amino-acid chain; its full sequence is Methyl-coenzyme M reductase II subunit alpha (553 aa).

Position 150 (Gln-150) interacts with coenzyme F430. Coenzyme B-binding positions include Arg-228, 259–260 (KH), and Arg-273. His-260 is modified (pros-methylhistidine). Residue Arg-274 is modified to 5-methylarginine. Tyr-335 lines the coenzyme M pocket. A 2-methylglutamine modification is found at Gln-402. Tyr-446 is a binding site for coenzyme M. 1-thioglycine is present on Gly-447. Asp-452 is subject to (Z)-2,3-didehydroaspartate. Position 454 is an S-methylcysteine (Cys-454).

Belongs to the methyl-coenzyme M reductase alpha subunit family. As to quaternary structure, MCR is a hexamer of two alpha, two beta, and two gamma chains, forming a dimer of heterotrimers. It depends on coenzyme F430 as a cofactor. Post-translationally, the alpha subunit contains six modified amino acids near the active site region. Is methylated on His-260, Arg-274, Gln-402 and Cys-454, probably by the action of specific S-adenosylmethionine-dependent methyltransferases. Also contains a thioglycine at position 447, forming a thiopeptide bond. Contains a didehydroaspartate residue at position 452. The methylation on C5 of Arg-274 is a post-translational methylation not essential in vivo, but which plays a role for the stability and structural integrity of MCR.

The enzyme catalyses coenzyme B + methyl-coenzyme M = methane + coenzyme M-coenzyme B heterodisulfide. The protein operates within one-carbon metabolism; methyl-coenzyme M reduction; methane from methyl-coenzyme M: step 1/1. Functionally, component of the methyl-coenzyme M reductase (MCR) I that catalyzes the reductive cleavage of methyl-coenzyme M (CoM-S-CH3 or 2-(methylthio)ethanesulfonate) using coenzyme B (CoB or 7-mercaptoheptanoylthreonine phosphate) as reductant which results in the production of methane and the mixed heterodisulfide of CoB and CoM (CoM-S-S-CoB). This is the final step in methanogenesis. In Methanothermobacter thermautotrophicus (strain ATCC 29096 / DSM 1053 / JCM 10044 / NBRC 100330 / Delta H) (Methanobacterium thermoautotrophicum), this protein is Methyl-coenzyme M reductase II subunit alpha (mrtA).